Reading from the N-terminus, the 294-residue chain is Protoheme IX farnesyltransferase (294 aa).

9 helical membrane-spanning segments follow: residues 24-44 (VVLL…PGWV), 48-68 (LIAF…AINH), 96-116 (ALWF…LFVN), 118-138 (LTAL…TGYL), 145-165 (NIVI…TAVT), 172-192 (ALLL…ALAI), 224-244 (VLLL…WIYL), 245-265 (LGAL…YFTD), and 268-288 (VVAM…FVFL).

The protein belongs to the UbiA prenyltransferase family. Protoheme IX farnesyltransferase subfamily.

Its subcellular location is the cell inner membrane. It catalyses the reaction heme b + (2E,6E)-farnesyl diphosphate + H2O = Fe(II)-heme o + diphosphate. The protein operates within porphyrin-containing compound metabolism; heme O biosynthesis; heme O from protoheme: step 1/1. In terms of biological role, converts heme B (protoheme IX) to heme O by substitution of the vinyl group on carbon 2 of heme B porphyrin ring with a hydroxyethyl farnesyl side group. The chain is Protoheme IX farnesyltransferase from Legionella pneumophila (strain Corby).